Consider the following 82-residue polypeptide: Cytochrome b559 subunit alpha (82 aa).

A helical transmembrane segment spans residues 21–35 (VIHSITIPSLFIAGW). Position 23 (histidine 23) interacts with heme.

It belongs to the PsbE/PsbF family. Heterodimer of an alpha subunit and a beta subunit. PSII is composed of 1 copy each of membrane proteins PsbA, PsbB, PsbC, PsbD, PsbE, PsbF, PsbH, PsbI, PsbJ, PsbK, PsbL, PsbM, PsbT, PsbX, PsbY, PsbZ, Psb30/Ycf12, at least 3 peripheral proteins of the oxygen-evolving complex and a large number of cofactors. It forms dimeric complexes. Requires heme b as cofactor.

Its subcellular location is the plastid. It is found in the chloroplast thylakoid membrane. In terms of biological role, this b-type cytochrome is tightly associated with the reaction center of photosystem II (PSII). PSII is a light-driven water:plastoquinone oxidoreductase that uses light energy to abstract electrons from H(2)O, generating O(2) and a proton gradient subsequently used for ATP formation. It consists of a core antenna complex that captures photons, and an electron transfer chain that converts photonic excitation into a charge separation. This Stigeoclonium helveticum (Green alga) protein is Cytochrome b559 subunit alpha.